A 1184-amino-acid polypeptide reads, in one-letter code: MATVSGRRRKRKIQLSKLFTLTGAKACFKPDHSKIGRSGFSRVVFCNQPDSPEAESRNYCDNYVRTTKYTLATFLPKSLFEQFRRVANFYFLVVGILSFTPLAPYTAVSAIVPLTFVILATMFKEGVEDWRRKQQDIEVNNRKVRVHRGNGNFDLREWKTLRVGDILKVEKNEFFPADLVLLSSSYEDAVCYVETMNLDGETNLKLKQGLEVTLSLREELNFRDFEAFIKCEDPNANLYSFVGTMDLKGEKYPLSPQQLLLRGSKLRNTDYIYGVVIFTGPDTKVVQNSTDPPSKRSMIERKMDKIIYLMFLMVFSLAFFGSVLFGIWTRDDFQNGVMERWYLKPDDSSIFFDPKRAPMAAIYHFLTALMLNSYFIPISLYVSIEIVKVLQSIFINQDIHMYYEEADKPAHARTSNLNEELGQVGTILSDKTGTLTCNSMEFIKCSIAGTAYGRGVTEVEMAMDKRKGSALVNQSNGNSTEDAVAAEPAVKGFNFRDERIMDGNWVTETHADVIQKFFQLLAVCHTVIPEVDEDTGKISYEAESPDEAAFVIAARELGFEFFTRTQTTISVRELDLVTGERVERLYSVLNVLEFSSSKKRMSVIVQDQDGKLLLLCKGADSVMFERLSESGRKYEKETRDHVNEYADAGLRTLILAYRELDENEYEVFTERISEAKNSVSADREALIDEVTEKIEKNLVLLGATAVEDKLQNGVPDCINKLAQAGIKIWVLTGDKMETAINIGFACSLLRRDMKQIIINLETPEIQQLEKSGEKDAIAALKENVLHQITSGKAQLKASGGNAKAFALIIDGKSLAYALEEDMKGIFLELAIGCASVICCRSSPKQKALVTRLVKTGSGQTTLAIGDGANDVGMLQEADIGVGISGVEGMQAVMSSDIAIAQFRYLERLLLVHGHWCYRRISKMICYFFYKNITFGFTLFLYEAYTSFSATPAYNDWYLSLYSVFFTSLPVICLGIFDQDVSAPFCLKFPVLYQEGVQNLLFSWRRILSWMFHGFCSAIIIFFLCKTSLESQAFNHEGKTAGRDILGGTMYTCVVWVVSLQMVLTISYFTLIQHVVVWGSVVIWYLFLMVYGSLPIRMSTDAYMVFLEALAPAPSYWITTLFVVLSTMMPYFIFSAIQMRFFPMSHGTVQLLRYEDQCSNSGNFEMGRQGSVRPTLVMRSHQPES.

The Cytoplasmic segment spans residues 1–75 (MATVSGRRRK…TTKYTLATFL (75 aa)). Residues 76–97 (PKSLFEQFRRVANFYFLVVGIL) traverse the membrane as a helical segment. Residues 98–101 (SFTP) are Extracellular-facing. A helical membrane pass occupies residues 102–124 (LAPYTAVSAIVPLTFVILATMFK). The Cytoplasmic portion of the chain corresponds to 125-306 (EGVEDWRRKQ…SMIERKMDKI (182 aa)). A helical transmembrane segment spans residues 307-328 (IYLMFLMVFSLAFFGSVLFGIW). The Extracellular portion of the chain corresponds to 329 to 364 (TRDDFQNGVMERWYLKPDDSSIFFDPKRAPMAAIYH). Residues 365-382 (FLTALMLNSYFIPISLYV) traverse the membrane as a helical segment. Residues 383 to 921 (SIEIVKVLQS…HGHWCYRRIS (539 aa)) lie on the Cytoplasmic side of the membrane. Catalysis depends on aspartate 430, which acts as the 4-aspartylphosphate intermediate. Mg(2+) contacts are provided by aspartate 866 and aspartate 870. A helical transmembrane segment spans residues 922–941 (KMICYFFYKNITFGFTLFLY). Residues 942-955 (EAYTSFSATPAYND) are Extracellular-facing. A helical membrane pass occupies residues 956-975 (WYLSLYSVFFTSLPVICLGI). Over 976-1005 (FDQDVSAPFCLKFPVLYQEGVQNLLFSWRR) the chain is Cytoplasmic. Residues 1006 to 1028 (ILSWMFHGFCSAIIIFFLCKTSL) form a helical membrane-spanning segment. The Extracellular portion of the chain corresponds to 1029 to 1041 (ESQAFNHEGKTAG). A helical membrane pass occupies residues 1042-1064 (RDILGGTMYTCVVWVVSLQMVLT). Over 1065–1070 (ISYFTL) the chain is Cytoplasmic. Residues 1071–1091 (IQHVVVWGSVVIWYLFLMVYG) form a helical membrane-spanning segment. Residues 1092–1108 (SLPIRMSTDAYMVFLEA) lie on the Extracellular side of the membrane. A helical membrane pass occupies residues 1109–1133 (LAPAPSYWITTLFVVLSTMMPYFIF). Topologically, residues 1134 to 1184 (SAIQMRFFPMSHGTVQLLRYEDQCSNSGNFEMGRQGSVRPTLVMRSHQPES) are cytoplasmic.

The protein belongs to the cation transport ATPase (P-type) (TC 3.A.3) family. Type IV subfamily.

It is found in the membrane. It carries out the reaction ATP + H2O + phospholipidSide 1 = ADP + phosphate + phospholipidSide 2.. Its function is as follows. Involved in transport of phospholipids. The polypeptide is Probable phospholipid-transporting ATPase 12 (Arabidopsis thaliana (Mouse-ear cress)).